A 276-amino-acid polypeptide reads, in one-letter code: Undecaprenyl-diphosphatase (276 aa).

A run of 6 helical transmembrane segments spans residues 43 to 63, 85 to 105, 109 to 129, 183 to 203, 214 to 234, and 249 to 269; these read RAMAFNIIIQLAAILAVVWEF, ANLLLAFMPAVVLGVLFADLI, LFNPITVATALVIGGVIMLWA, AATEFSFFLAMPTMVGAAVYS, SDLPVFAIGFVTSFIFAMIAV, and FAWYRIAFGLLILATWQFGWV.

It belongs to the UppP family.

Its subcellular location is the cell inner membrane. The catalysed reaction is di-trans,octa-cis-undecaprenyl diphosphate + H2O = di-trans,octa-cis-undecaprenyl phosphate + phosphate + H(+). In terms of biological role, catalyzes the dephosphorylation of undecaprenyl diphosphate (UPP). Confers resistance to bacitracin. This chain is Undecaprenyl-diphosphatase, found in Pseudomonas putida (strain W619).